The chain runs to 105 residues: V-type ATP synthase subunit F (105 aa).

The protein belongs to the V-ATPase F subunit family.

Its function is as follows. Produces ATP from ADP in the presence of a proton gradient across the membrane. In Clostridium perfringens (strain 13 / Type A), this protein is V-type ATP synthase subunit F.